Reading from the N-terminus, the 185-residue chain is Thymidine kinase (185 aa).

ATP-binding positions include 7–14 (GPMFAGKT) and 83–86 (DEIQ). The active-site Proton acceptor is the glutamate 84. Residues cysteine 139, cysteine 142, cysteine 177, and histidine 180 each contribute to the Zn(2+) site.

This sequence belongs to the thymidine kinase family. Homotetramer.

Its subcellular location is the cytoplasm. The catalysed reaction is thymidine + ATP = dTMP + ADP + H(+). The chain is Thymidine kinase from Pyrobaculum aerophilum (strain ATCC 51768 / DSM 7523 / JCM 9630 / CIP 104966 / NBRC 100827 / IM2).